Reading from the N-terminus, the 506-residue chain is Histone deacetylase complex subunit CTI6 (506 aa).

A disordered region spans residues 49 to 71 (EESVKQEDVPMEGGEGEVEEEEG). Over residues 62-71 (GEGEVEEEEG) the composition is skewed to acidic residues. The PHD-type zinc-finger motif lies at 72-123 (ETRCICGELDTPDDSGFFIQCEQCSSWQHGYCVSITQDNAPDKYWCEQCRPE). Residues 138–425 (IYKPVQEKRR…KPRLPPQRTS (288 aa)) form a disordered region. Threonine 174 is subject to Phosphothreonine. Phosphoserine is present on serine 175. Residue threonine 177 is modified to Phosphothreonine. Positions 179 to 195 (DNVDDIGDEEDEVEDEA) are enriched in acidic residues. Serine 216 and serine 267 each carry phosphoserine. Basic and acidic residues-rich tracts occupy residues 231 to 271 (DSDK…HQED) and 312 to 342 (DDMKESLRPSKEQSMEKTNDVEKEASQEKES). Positions 373 to 393 (ASSRGSKRVSKPARKGNRTRR) are enriched in basic residues. Residues 394 to 404 (SNTSSDTNQNR) are compositionally biased toward polar residues. Basic and acidic residues predominate over residues 405-415 (RSADIGTDKPV).

Component of the RPD3C(L) complex composed of at least ASH1, CTI6, DEP1, PHO23, RPD3, RXT2, RXT3, SAP30, SDS3, SIN3, UME1 and UME6. Interacts with CYC8.

It is found in the nucleus. In terms of biological role, component of the RPD3C(L) histone deacetylase complex (HDAC). Responsible for the deacetylation of lysine residues on the N-terminal part of the core histones (H2A, H2B, H3 and H4). Histone deacetylation gives a tag for epigenetic repression and plays an important role in transcriptional regulation, cell cycle progression and developmental events. CTI6 links the SAGA coactivator to the CYC8-TUP1 corepressor. Involved in transcription regulation of heme-regulated genes and required for GCN5 recruitment, histone H3 acetylation and SPT15/TBP binding to promoters. The chain is Histone deacetylase complex subunit CTI6 (CTI6) from Saccharomyces cerevisiae (strain ATCC 204508 / S288c) (Baker's yeast).